Here is a 330-residue protein sequence, read N- to C-terminus: tRNA U34 carboxymethyltransferase (330 aa).

Carboxy-S-adenosyl-L-methionine is bound by residues Lys91, Trp105, Lys110, Gly130, 152–154 (DPS), 181–182 (IE), Met196, Tyr200, and Arg315.

Belongs to the class I-like SAM-binding methyltransferase superfamily. CmoB family. As to quaternary structure, homotetramer.

It catalyses the reaction carboxy-S-adenosyl-L-methionine + 5-hydroxyuridine(34) in tRNA = 5-carboxymethoxyuridine(34) in tRNA + S-adenosyl-L-homocysteine + H(+). Functionally, catalyzes carboxymethyl transfer from carboxy-S-adenosyl-L-methionine (Cx-SAM) to 5-hydroxyuridine (ho5U) to form 5-carboxymethoxyuridine (cmo5U) at position 34 in tRNAs. The chain is tRNA U34 carboxymethyltransferase from Shewanella oneidensis (strain ATCC 700550 / JCM 31522 / CIP 106686 / LMG 19005 / NCIMB 14063 / MR-1).